Here is a 129-residue protein sequence, read N- to C-terminus: Large ribosomal subunit protein bL12 (129 aa).

It belongs to the bacterial ribosomal protein bL12 family. As to quaternary structure, homodimer. Part of the ribosomal stalk of the 50S ribosomal subunit. Forms a multimeric L10(L12)X complex, where L10 forms an elongated spine to which 2 to 4 L12 dimers bind in a sequential fashion. Binds GTP-bound translation factors.

Its function is as follows. Forms part of the ribosomal stalk which helps the ribosome interact with GTP-bound translation factors. Is thus essential for accurate translation. The protein is Large ribosomal subunit protein bL12 of Treponema pallidum (strain Nichols).